Reading from the N-terminus, the 183-residue chain is ATP-dependent protease subunit HslV (183 aa).

Thr2 is an active-site residue. The Na(+) site is built by Gly157, Cys160, and Thr163.

Belongs to the peptidase T1B family. HslV subfamily. In terms of assembly, a double ring-shaped homohexamer of HslV is capped on each side by a ring-shaped HslU homohexamer. The assembly of the HslU/HslV complex is dependent on binding of ATP.

Its subcellular location is the cytoplasm. It carries out the reaction ATP-dependent cleavage of peptide bonds with broad specificity.. With respect to regulation, allosterically activated by HslU binding. Protease subunit of a proteasome-like degradation complex believed to be a general protein degrading machinery. This chain is ATP-dependent protease subunit HslV, found in Vibrio campbellii (strain ATCC BAA-1116).